The primary structure comprises 599 residues: MSRSLLLWFLLFLLLLPPLPVLLADPGAPTPVNPCCYYPCQHQGICVRFGLDRYQCDCTRTGYSGPNCTIPGLWTWLRNSLRPSPSFTHFLLTHGRWFWEFVNATFIREMLMRLVLTVRSNLIPSPPTYNSAHDYISWESFSNVSYYTRILPSVPKDCPTPMGTKGKKQLPDAQLLARRFLLRRKFIPDPQGTNLMFAFFAQHFTHQFFKTSGKMGPGFTKALGHGVDLGHIYGDNLERQYQLRLFKDGKLKYQVLDGEMYPPSVEEAPVLMHYPRGIPPQSQMAVGQEVFGLLPGLMLYATLWLREHNRVCDLLKAEHPTWGDEQLFQTTRLILIGETIKIVIEEYVQQLSGYFLQLKFDPELLFGVQFQYRNRIAMEFNHLYHWHPLMPDSFKVGSQEYSYEQFLFNTSMLVDYGVEALVDAFSRQIAGRIGGGRNMDHHILHVAVDVIRESREMRLQPFNEYRKRFGMKPYTSFQELVGEKEMAAELEELYGDIDALEFYPGLLLEKCHPNSIFGESMIEIGAPFSLKGLLGNPICSPEYWKPSTFGGEVGFNIVKTATLKKLVCLNTKTCPYVSFRVPDASQDDGPAVERPSTEL.

The first 23 residues, 1-23 (MSRSLLLWFLLFLLLLPPLPVLL), serve as a signal peptide directing secretion. The 39-residue stretch at 31-69 (PVNPCCYYPCQHQGICVRFGLDRYQCDCTRTGYSGPNCT) folds into the EGF-like domain. 4 disulfides stabilise this stretch: Cys-35–Cys-46, Cys-36–Cys-158, Cys-40–Cys-56, and Cys-58–Cys-68. Residues Asn-67, Asn-103, and Asn-143 are each glycosylated (N-linked (GlcNAc...) asparagine). His-206 serves as the catalytic Proton acceptor. The For cyclooxygenase activity role is filled by Tyr-384. His-387 is a heme b binding site. An intrachain disulfide couples Cys-568 to Cys-574.

This sequence belongs to the prostaglandin G/H synthase family. As to quaternary structure, homodimer. It depends on heme b as a cofactor.

Its subcellular location is the microsome membrane. It is found in the endoplasmic reticulum membrane. It catalyses the reaction (5Z,8Z,11Z,14Z)-eicosatetraenoate + AH2 + 2 O2 = prostaglandin H2 + A + H2O. The catalysed reaction is (5Z,8Z,11Z,14Z)-eicosatetraenoate + 2 O2 = prostaglandin G2. It carries out the reaction prostaglandin G2 + AH2 = prostaglandin H2 + A + H2O. The enzyme catalyses (9Z,12Z)-octadecadienoate + AH2 + O2 = (9R)-hydroxy-(10E,12Z)-octadecadienoate + A + H2O. It catalyses the reaction (9Z,12Z)-octadecadienoate + AH2 + O2 = (9S)-hydroxy-(10E,12Z)-octadecadienoate + A + H2O. The catalysed reaction is (9Z,12Z)-octadecadienoate + AH2 + O2 = (13S)-hydroxy-(9Z,11E)-octadecadienoate + A + H2O. It carries out the reaction (9Z,12Z)-octadecadienoate + AH2 + O2 = (13R)-hydroxy-(9Z,11E)-octadecadienoate + A + H2O. It participates in lipid metabolism; prostaglandin biosynthesis. Its activity is regulated as follows. The cyclooxygenase activity is inhibited by nonsteroidal anti-inflammatory drugs (NSAIDs) including ibuprofen, flurbiprofen, ketoprofen, naproxen, flurbiprofen, anirolac, fenclofenac and diclofenac. Dual cyclooxygenase and peroxidase that plays an important role in the biosynthesis pathway of prostanoids, a class of C20 oxylipins mainly derived from arachidonate ((5Z,8Z,11Z,14Z)-eicosatetraenoate, AA, C20:4(n-6)), with a particular role in the inflammatory response. The cyclooxygenase activity oxygenates AA to the hydroperoxy endoperoxide prostaglandin G2 (PGG2), and the peroxidase activity reduces PGG2 to the hydroxy endoperoxide prostaglandin H2 (PGH2), the precursor of all 2-series prostaglandins and thromboxanes. This complex transformation is initiated by abstraction of hydrogen at carbon 13 (with S-stereochemistry), followed by insertion of molecular O2 to form the endoperoxide bridge between carbon 9 and 11 that defines prostaglandins. The insertion of a second molecule of O2 (bis-oxygenase activity) yields a hydroperoxy group in PGG2 that is then reduced to PGH2 by two electrons. Involved in the constitutive production of prostanoids in particular in the stomach and platelets. In gastric epithelial cells, it is a key step in the generation of prostaglandins, such as prostaglandin E2 (PGE2), which plays an important role in cytoprotection. In platelets, it is involved in the generation of thromboxane A2 (TXA2), which promotes platelet activation and aggregation, vasoconstriction and proliferation of vascular smooth muscle cells. Can also use linoleate (LA, (9Z,12Z)-octadecadienoate, C18:2(n-6)) as substrate and produce hydroxyoctadecadienoates (HODEs) in a regio- and stereospecific manner, being (9R)-HODE ((9R)-hydroxy-(10E,12Z)-octadecadienoate) and (13S)-HODE ((13S)-hydroxy-(9Z,11E)-octadecadienoate) its major products. The protein is Prostaglandin G/H synthase 1 of Homo sapiens (Human).